The following is a 977-amino-acid chain: Dynamin-like GTPase OPA1, mitochondrial (977 aa).

Residues 1–86 constitute a mitochondrion transit peptide; that stretch reads MWRTKAAAAC…VKYGYQSYRN (86 aa). At 87 to 95 the chain is on the mitochondrial matrix side; sequence FWLARLASR. Residues 96–112 form a helical membrane-spanning segment; sequence LLKIRYLILGSAVGGGY. Residues 113 to 787 are Mitochondrial intermembrane-facing; it reads TAKKTYDQWE…SVIEDMVGPD (675 aa). The stretch at 224–271 forms a coiled coil; the sequence is KKVSDKEKIDQLQEELLRTQLKYQRMLERLEKENKELRKLVLQRDDKG. The 277-residue stretch at 302-578 folds into the Dynamin-type G domain; that stretch reads QDHLPRVVVV…FWKMVRESVE (277 aa). The G1 motif stretch occupies residues 312–319; sequence GDQSAGKT. GTP contacts are provided by serine 315, glycine 317, lysine 318, threonine 319, serine 320, and glycine 334. Threonine 319 contributes to the Mg(2+) binding site. Residues 338 to 341 are G2 motif; sequence MMTR. The Mg(2+) site is built by threonine 340 and aspartate 415. The G3 motif stretch occupies residues 415–418; the sequence is DLPG. The interval 484–487 is G4 motif; it reads TKVD. The GTP site is built by lysine 485, aspartate 487, and threonine 520. Positions 518-521 are G5 motif; it reads VVTG. 2 stalk region regions span residues 606–853 and 891–945; these read DRNE…IKDT and CNDI…VKLL. The tract at residues 753-873 is paddle region; the sequence is SDKQQWDAAI…KTALNHCNLC (121 aa). Residues 788-798 lie within the membrane without spanning it; that stretch reads WKKRWLYWISR. At 799-977 the chain is on the mitochondrial intermembrane side; the sequence is TKEQNIRNET…AFIEALHQEK (179 aa). The cysteines at positions 873 and 891 are disulfide-linked. Residues 911–977 adopt a coiled-coil conformation; it reads LRQQLTNTEV…AFIEALHQEK (67 aa).

This sequence belongs to the TRAFAC class dynamin-like GTPase superfamily. Dynamin/Fzo/YdjA family. As to quaternary structure, oligomeric complex consisting of membrane-bound and soluble forms of OPA1. Cleaved by OMA1 or YME1L downstream of the transmembrane region in response to different signals to generate soluble forms. Cleaved by OMA1 at position S1 following stress conditions, generating the short soluble form (Dynamin-like GTPase OPA1, short form; S-OPA1).

The protein localises to the mitochondrion inner membrane. It is found in the mitochondrion intermembrane space. It catalyses the reaction GTP + H2O = GDP + phosphate + H(+). Its function is as follows. Dynamin-related GTPase that is essential for normal mitochondrial morphology by mediating fusion of the mitochondrial inner membranes, regulating cristae morphology and maintaining respiratory chain function. Exists in two forms: the transmembrane, long form (Dynamin-like GTPase OPA1, long form; L-OPA1), which is tethered to the inner mitochondrial membrane, and the short soluble form (Dynamin-like GTPase OPA1, short form; S-OPA1), which results from proteolytic cleavage and localizes in the intermembrane space. Both forms (L-OPA1 and S-OPA1) cooperate to catalyze the fusion of the mitochondrial inner membrane. The equilibrium between L-OPA1 and S-OPA1 is essential: excess levels of S-OPA1, produced by cleavage by OMA1 following loss of mitochondrial membrane potential, lead to an impaired equilibrium between L-OPA1 and S-OPA1, inhibiting mitochondrial fusion. The balance between L-OPA1 and S-OPA1 also influences cristae shape and morphology. Its role in mitochondrial morphology is required for mitochondrial genome maintenance. Functionally, constitutes the transmembrane long form (L-OPA1) that plays a central role in mitochondrial inner membrane fusion and cristae morphology. L-OPA1 and the soluble short form (S-OPA1) form higher-order helical assemblies that coordinate the fusion of mitochondrial inner membranes. Inner membrane-anchored L-OPA1 molecules initiate membrane remodeling by recruiting soluble S-OPA1 to rapidly polymerize into a flexible cylindrical scaffold encaging the mitochondrial inner membrane. Once at the membrane surface, the formation of S-OPA1 helices induce bilayer curvature. OPA1 dimerization through the paddle region, which inserts into cardiolipin-containing membrane, promotes GTP hydrolysis and the helical assembly of a flexible OPA1 lattice on the membrane, which drives membrane curvature and mitochondrial fusion. Plays a role in the maintenance and remodeling of mitochondrial cristae, some invaginations of the mitochondrial inner membrane that provide an increase in the surface area. Probably acts by forming helical filaments at the inside of inner membrane tubes with the shape and dimensions of crista junctions. In terms of biological role, constitutes the soluble short form (S-OPA1) generated by cleavage by OMA1, which plays a central role in mitochondrial inner membrane fusion and cristae morphology. The transmembrane long form (L-OPA1) and the S-OPA1 form higher-order helical assemblies that coordinate the fusion of mitochondrial inner membranes. Inner membrane-anchored L-OPA1 molecules initiate membrane remodeling by recruiting soluble S-OPA1 to rapidly polymerize into a flexible cylindrical scaffold encaging the mitochondrial inner membrane. Once at the membrane surface, the formation of S-OPA1 helices induce bilayer curvature. OPA1 dimerization through the paddle region, which inserts into cardiolipin-containing membrane, promotes GTP hydrolysis and the helical assembly of a flexible OPA1 lattice on the membrane, which drives membrane curvature and mitochondrial fusion. Excess levels of S-OPA1 produced by cleavage by OMA1 following stress conditions that induce loss of mitochondrial membrane potential, lead to an impaired equilibrium between L-OPA1 and S-OPA1, thereby inhibiting mitochondrial fusion. Plays a role in the maintenance and remodeling of mitochondrial cristae, some invaginations of the mitochondrial inner membrane that provide an increase in the surface area. Probably acts by forming helical filaments at the inside of inner membrane tubes with the shape and dimensions of crista junctions. The sequence is that of Dynamin-like GTPase OPA1, mitochondrial from Gallus gallus (Chicken).